The chain runs to 275 residues: Formamidopyrimidine-DNA glycosylase (275 aa).

Catalysis depends on Pro-2, which acts as the Schiff-base intermediate with DNA. The active-site Proton donor is the Glu-3. The active-site Proton donor; for beta-elimination activity is the Lys-58. 3 residues coordinate DNA: His-93, Arg-111, and Arg-156. An FPG-type zinc finger spans residues 241-275 (FAYDRAGLPCRVCGTPIRQIVQGQRSTYFCPTCQR). Arg-265 functions as the Proton donor; for delta-elimination activity in the catalytic mechanism.

The protein belongs to the FPG family. As to quaternary structure, monomer. Zn(2+) is required as a cofactor.

The catalysed reaction is Hydrolysis of DNA containing ring-opened 7-methylguanine residues, releasing 2,6-diamino-4-hydroxy-5-(N-methyl)formamidopyrimidine.. The enzyme catalyses 2'-deoxyribonucleotide-(2'-deoxyribose 5'-phosphate)-2'-deoxyribonucleotide-DNA = a 3'-end 2'-deoxyribonucleotide-(2,3-dehydro-2,3-deoxyribose 5'-phosphate)-DNA + a 5'-end 5'-phospho-2'-deoxyribonucleoside-DNA + H(+). In terms of biological role, involved in base excision repair of DNA damaged by oxidation or by mutagenic agents. Acts as a DNA glycosylase that recognizes and removes damaged bases. Has a preference for oxidized purines, such as 7,8-dihydro-8-oxoguanine (8-oxoG). Has AP (apurinic/apyrimidinic) lyase activity and introduces nicks in the DNA strand. Cleaves the DNA backbone by beta-delta elimination to generate a single-strand break at the site of the removed base with both 3'- and 5'-phosphates. In Burkholderia vietnamiensis (strain G4 / LMG 22486) (Burkholderia cepacia (strain R1808)), this protein is Formamidopyrimidine-DNA glycosylase.